The sequence spans 508 residues: Photosystem II CP47 reaction center protein (508 aa).

Helical transmembrane passes span 21 to 36 (AVHI…WAGS), 101 to 115 (IVFS…IWHW), 140 to 156 (GIHL…FGAF), 203 to 218 (IAAG…FHLS), 237 to 252 (VLSS…AFVV), and 457 to 472 (TFAL…HGAR).

Belongs to the PsbB/PsbC family. PsbB subfamily. PSII is composed of 1 copy each of membrane proteins PsbA, PsbB, PsbC, PsbD, PsbE, PsbF, PsbH, PsbI, PsbJ, PsbK, PsbL, PsbM, PsbT, PsbX, PsbY, PsbZ, Psb30/Ycf12, at least 3 peripheral proteins of the oxygen-evolving complex and a large number of cofactors. It forms dimeric complexes. It depends on Binds multiple chlorophylls. PSII binds additional chlorophylls, carotenoids and specific lipids. as a cofactor.

It localises to the plastid. It is found in the chloroplast thylakoid membrane. Its function is as follows. One of the components of the core complex of photosystem II (PSII). It binds chlorophyll and helps catalyze the primary light-induced photochemical processes of PSII. PSII is a light-driven water:plastoquinone oxidoreductase, using light energy to abstract electrons from H(2)O, generating O(2) and a proton gradient subsequently used for ATP formation. This chain is Photosystem II CP47 reaction center protein, found in Hordeum vulgare (Barley).